Here is a 505-residue protein sequence, read N- to C-terminus: Deoxyguanosinetriphosphate triphosphohydrolase (505 aa).

The region spanning 66 to 273 is the HD domain; the sequence is RLTHSMEVQQ…MEAADDISYC (208 aa).

Belongs to the dGTPase family. Type 1 subfamily. As to quaternary structure, homotetramer. Mg(2+) is required as a cofactor.

It carries out the reaction dGTP + H2O = 2'-deoxyguanosine + triphosphate + H(+). Its function is as follows. dGTPase preferentially hydrolyzes dGTP over the other canonical NTPs. The chain is Deoxyguanosinetriphosphate triphosphohydrolase from Escherichia coli (strain K12 / MC4100 / BW2952).